A 219-amino-acid chain; its full sequence is Octanoyltransferase (219 aa).

Residues serine 32 to asparagine 207 form the BPL/LPL catalytic domain. Substrate is bound by residues arginine 71–histidine 78, serine 138–glycine 140, and glycine 151–alanine 153. The Acyl-thioester intermediate role is filled by cysteine 169.

Belongs to the LipB family.

The protein localises to the cytoplasm. The catalysed reaction is octanoyl-[ACP] + L-lysyl-[protein] = N(6)-octanoyl-L-lysyl-[protein] + holo-[ACP] + H(+). It functions in the pathway protein modification; protein lipoylation via endogenous pathway; protein N(6)-(lipoyl)lysine from octanoyl-[acyl-carrier-protein]: step 1/2. Functionally, catalyzes the transfer of endogenously produced octanoic acid from octanoyl-acyl-carrier-protein onto the lipoyl domains of lipoate-dependent enzymes. Lipoyl-ACP can also act as a substrate although octanoyl-ACP is likely to be the physiological substrate. The sequence is that of Octanoyltransferase from Shewanella woodyi (strain ATCC 51908 / MS32).